A 616-amino-acid polypeptide reads, in one-letter code: Probable beta-hexosaminidase ARB_01353 (616 aa).

Positions 1–20 are cleaved as a signal peptide; that stretch reads MRFAKALAITAVLLSGVVEA. The segment at 96–117 is disordered; sequence KFDPFPDQSSKPKEKRQNAPPG. An N-linked (GlcNAc...) asparagine glycan is attached at asparagine 333. The active-site Proton donor is the glutamate 361.

This sequence belongs to the glycosyl hydrolase 20 family.

Its subcellular location is the secreted. It catalyses the reaction Hydrolysis of terminal non-reducing N-acetyl-D-hexosamine residues in N-acetyl-beta-D-hexosaminides.. Functionally, beta-hexosaminidase that shows a broad substrate specificity. The chain is Probable beta-hexosaminidase ARB_01353 from Arthroderma benhamiae (strain ATCC MYA-4681 / CBS 112371) (Trichophyton mentagrophytes).